A 422-amino-acid chain; its full sequence is Histidine--tRNA ligase (422 aa).

The protein belongs to the class-II aminoacyl-tRNA synthetase family. In terms of assembly, homodimer.

It localises to the cytoplasm. The catalysed reaction is tRNA(His) + L-histidine + ATP = L-histidyl-tRNA(His) + AMP + diphosphate + H(+). This Ruthia magnifica subsp. Calyptogena magnifica protein is Histidine--tRNA ligase.